A 384-amino-acid polypeptide reads, in one-letter code: Urea transporter 1 (384 aa).

The next 5 membrane-spanning stretches (helical) occupy residues 61 to 81, 85 to 105, 111 to 131, 138 to 158, and 168 to 188; these read ISQVVFVSNPISGILILAGLL, PWWALCGCVGTVVSTLTALLL, AIAAGLQGYNATLVGILMAVF, FWWLIFPVSAMSMTCPVFSSA, and LPVFTLPFNMALSLYLSATGH. An N-linked (GlcNAc...) asparagine glycan is attached at N206. A run of 4 helical transmembrane segments spans residues 250–270, 279–299, 305–325, and 327–347; these read LMCLHAAIGSLLGVIAGLSLA, GLWGFNSSLACIAIGGMFMAL, LLALACALFTAYFGACMTHLM, and AVHLPACTWSFCLATLLFLLL.

This sequence belongs to the urea transporter family. As to quaternary structure, homotrimer; each subunit contains a pore through which urea permeates. Identified in a complex with STOM. As to expression, expressed in brain, spleen, kidney, testis and lung, with highest levels in brain.

The protein resides in the cell membrane. It localises to the basolateral cell membrane. The enzyme catalyses urea(in) = urea(out). Functionally, mediates the transport of urea driven by a concentration gradient across the cell membrane. Mediates the transport of urea across the cell membranes of erythrocytes and the renal inner medullary collecting duct which is critical to the urinary concentrating mechanism. Facilitates water transport in erythrocytes. The chain is Urea transporter 1 (Slc14a1) from Rattus norvegicus (Rat).